We begin with the raw amino-acid sequence, 201 residues long: Dephospho-CoA kinase (201 aa).

The DPCK domain maps to 7-201 (AIALSGGIGT…IETIKKDFHV (195 aa)). An ATP-binding site is contributed by 15–20 (GTGKST).

This sequence belongs to the CoaE family.

Its subcellular location is the cytoplasm. The enzyme catalyses 3'-dephospho-CoA + ATP = ADP + CoA + H(+). Its pathway is cofactor biosynthesis; coenzyme A biosynthesis; CoA from (R)-pantothenate: step 5/5. In terms of biological role, catalyzes the phosphorylation of the 3'-hydroxyl group of dephosphocoenzyme A to form coenzyme A. The polypeptide is Dephospho-CoA kinase (Wolinella succinogenes (strain ATCC 29543 / DSM 1740 / CCUG 13145 / JCM 31913 / LMG 7466 / NCTC 11488 / FDC 602W) (Vibrio succinogenes)).